Here is a 322-residue protein sequence, read N- to C-terminus: ATP-dependent 6-phosphofructokinase (322 aa).

G11 lines the ATP pocket. R21 to R25 provides a ligand contact to ADP. ATP is bound by residues R72–C73 and G102–S105. Mg(2+) is bound at residue D103. A substrate-binding site is contributed by T127–D129. The active-site Proton acceptor is the D129. R156 contacts ADP. Substrate contacts are provided by residues R164 and M171–R173. ADP-binding positions include G187–E189, R213, and K215–H217. Residues E224, R245, and H251–R254 each bind substrate.

It belongs to the phosphofructokinase type A (PFKA) family. ATP-dependent PFK group I subfamily. Prokaryotic clade 'B1' sub-subfamily. As to quaternary structure, homotetramer. Requires Mg(2+) as cofactor.

The protein localises to the cytoplasm. The enzyme catalyses beta-D-fructose 6-phosphate + ATP = beta-D-fructose 1,6-bisphosphate + ADP + H(+). It participates in carbohydrate degradation; glycolysis; D-glyceraldehyde 3-phosphate and glycerone phosphate from D-glucose: step 3/4. Its activity is regulated as follows. Allosterically activated by ADP and other diphosphonucleosides, and allosterically inhibited by phosphoenolpyruvate. In terms of biological role, catalyzes the phosphorylation of D-fructose 6-phosphate to fructose 1,6-bisphosphate by ATP, the first committing step of glycolysis. The protein is ATP-dependent 6-phosphofructokinase of Staphylococcus epidermidis (strain ATCC 12228 / FDA PCI 1200).